A 109-amino-acid polypeptide reads, in one-letter code: Putative small proline-rich protein 2J (109 aa).

5 repeat units span residues 21–29, 30–38, 39–47, 48–56, and 57–65. Residues 21–65 form a 5 X 9 AA approximate tandem repeats region; the sequence is RSAQSPVLCQSAPSLVLLQSAQSPIHCQSALSHAHLSHASRNALL. Residues 76–109 form a disordered region; that stretch reads AHPRANKGFSSLQNQKKRTESILHKSIATPPSSI.

It belongs to the cornifin (SPRR) family. Not expressed in uterus.

It localises to the cytoplasm. Functionally, cross-linked envelope protein of keratinocytes. It is a keratinocyte protein that first appears in the cell cytosol, but ultimately becomes cross-linked to membrane proteins by transglutaminase. All that results in the formation of an insoluble envelope beneath the plasma membrane. The chain is Putative small proline-rich protein 2J (Sprr2j) from Mus musculus (Mouse).